Reading from the N-terminus, the 550-residue chain is Chaperonin GroEL (550 aa).

ATP is bound by residues 30–33 (TLGP), Lys51, 87–91 (DGTTT), Gly416, 480–482 (NVA), and Asp496. The interval 525–550 (LPKKDDEGGGGDMGGMGGMGGMGGMM) is disordered. Gly residues predominate over residues 534–550 (GGDMGGMGGMGGMGGMM).

The protein belongs to the chaperonin (HSP60) family. As to quaternary structure, forms a cylinder of 14 subunits composed of two heptameric rings stacked back-to-back. Interacts with the co-chaperonin GroES.

The protein localises to the cytoplasm. It catalyses the reaction ATP + H2O + a folded polypeptide = ADP + phosphate + an unfolded polypeptide.. Its function is as follows. Together with its co-chaperonin GroES, plays an essential role in assisting protein folding. The GroEL-GroES system forms a nano-cage that allows encapsulation of the non-native substrate proteins and provides a physical environment optimized to promote and accelerate protein folding. The polypeptide is Chaperonin GroEL (Halorhodospira halophila (strain DSM 244 / SL1) (Ectothiorhodospira halophila (strain DSM 244 / SL1))).